The following is a 373-amino-acid chain: Dof zinc finger protein 3 (373 aa).

Positions Met1–Glu23 are disordered. The segment covering Val10–Glu23 has biased composition (basic and acidic residues). The segment at Pro45–Arg99 adopts a Dof-type zinc-finger fold. Residues Cys47, Cys50, Cys72, and Cys75 each contribute to the Zn(2+) site. Residues Ala297–Ala327 form a disordered region.

As to quaternary structure, interacts with RISBZ1/BZIP58.

The protein localises to the nucleus. Its function is as follows. Transcriptional activator that binds specifically to the DNA consensus core sequence 5'-AAAG-3' also known as prolamin box. Can activate the expression of genes encoding for the seed storage proteins glutelin, prolamin and globulin. Functions synergistically with RISBZ/BZIP58 to positively regulate quantitatively many seed storage proteins. Functions synergistically with RISBZ1/BZIP58 to positively regulate some metabolic enzymes, such as alanine aminotransferase and pyruvate phosphate dikinase, that are expressed in developing seeds. Functions synergistically with RISBZ1/BZIP58 to positively regulate genes that are key players in the development of aleurone layers. Functions synergistically with RISBZ1/BZIP58 to positively regulate the glutelin GLUD-1 gene in endosperm of developing seeds. Can activate the expression of the bifunctional lysine-degrading enzyme, lysine ketoglutarate reductase/saccharopine dehydrogenase (LKR/SDH), one of the key regulators determining free lysine content in plants. In germinating seeds, involved in the gibberellin-mediated activation of the alpha-amylase AMY1.1/AMY1A gene. The chain is Dof zinc finger protein 3 from Oryza sativa subsp. japonica (Rice).